Here is an 831-residue protein sequence, read N- to C-terminus: DNA polymerase I, thermostable (831 aa).

The 85-residue stretch at 174-258 (RPEQWVDYRA…TDLPLEVDFG (85 aa)) folds into the 5'-3' exonuclease domain. A polymerase region spans residues 409 to 831 (ERLFQTLKER…LGEDWLSAKE (423 aa)).

Belongs to the DNA polymerase type-A family.

The enzyme catalyses DNA(n) + a 2'-deoxyribonucleoside 5'-triphosphate = DNA(n+1) + diphosphate. Its function is as follows. In addition to polymerase activity, this DNA polymerase exhibits 5'-3' exonuclease activity. The sequence is that of DNA polymerase I, thermostable (polA) from Thermus thermophilus.